We begin with the raw amino-acid sequence, 197 residues long: Phospholipid hydroperoxide glutathione peroxidase (197 aa).

Residue serine 40 is modified to Phosphoserine. Selenocysteine 73 is an active-site residue. Selenocysteine 73 is a non-standard amino acid (selenocysteine). The residue at position 78 (valine 78) is a Phosphoserine.

Belongs to the glutathione peroxidase family. In terms of assembly, monomer. Has a tendency to form higher mass oligomers. Interacts with FUNDC1; this interaction promotes GPX4 recruitment into mitochondria through TOM/TIM complex where it is degraded by mitophagy. In terms of tissue distribution, present primarily in testis. Expressed in flagella of epididymal sperm. Isoform Cytoplasmic: Highly expressed in testis. Present in spermatogonia, spermatocyte and spermatid (at protein level).

It is found in the nucleus. It localises to the nucleolus. Its subcellular location is the mitochondrion. The protein localises to the cytoplasm. It catalyses the reaction a hydroperoxy polyunsaturated fatty acid + 2 glutathione = a hydroxy polyunsaturated fatty acid + glutathione disulfide + H2O. The enzyme catalyses 2 glutathione + H2O2 = glutathione disulfide + 2 H2O. The catalysed reaction is tert-butyl hydroperoxide + 2 glutathione = tert-butanol + glutathione disulfide + H2O. It carries out the reaction cumene hydroperoxide + 2 glutathione = 2-phenylpropan-2-ol + glutathione disulfide + H2O. It catalyses the reaction (9S)-hydroperoxy-(10E,12Z)-octadecadienoate + 2 glutathione = (9S)-hydroxy-(10E,12Z)-octadecadienoate + glutathione disulfide + H2O. The enzyme catalyses (13S)-hydroperoxy-(9Z,11E)-octadecadienoate + 2 glutathione = (13S)-hydroxy-(9Z,11E)-octadecadienoate + glutathione disulfide + H2O. The catalysed reaction is (5S)-hydroperoxy-(6E,8Z,11Z,14Z)-eicosatetraenoate + 2 glutathione = (5S)-hydroxy-(6E,8Z,11Z,14Z)-eicosatetraenoate + glutathione disulfide + H2O. It carries out the reaction (12R)-hydroperoxy-(5Z,8Z,10E,14Z)-eicosatetraenoate + 2 glutathione = (12R)-hydroxy-(5Z,8Z,10E,14Z)-eicosatetraenoate + glutathione disulfide + H2O. It catalyses the reaction (12S)-hydroperoxy-(5Z,8Z,10E,14Z)-eicosatetraenoate + 2 glutathione = (12S)-hydroxy-(5Z,8Z,10E,14Z)-eicosatetraenoate + glutathione disulfide + H2O. The enzyme catalyses (15S)-hydroperoxy-(5Z,8Z,11Z,13E)-eicosatetraenoate + 2 glutathione = (15S)-hydroxy-(5Z,8Z,11Z,13E)-eicosatetraenoate + glutathione disulfide + H2O. The catalysed reaction is (5S)-hydroperoxy-(6E,8Z,11Z,14Z,17Z)-eicosapentaenoate + 2 glutathione = (5S)-hydroxy-(6E,8Z,11Z,14Z,17Z)-eicosapentaenoate + glutathione disulfide + H2O. It carries out the reaction (12S)-hydroperoxy-(5Z,8Z,10E,14Z,17Z)-eicosapentaenoate + 2 glutathione = (12S)-hydroxy-(5Z,8Z,10E,14Z,17Z)-eicosapentaenoate + glutathione disulfide + H2O. It catalyses the reaction (15S)-hydroperoxy-(5Z,8Z,11Z,13E,17Z)-eicosapentaenoate + 2 glutathione = (15S)-hydroxy-(5Z,8Z,11Z,13E,17Z)-eicosapentaenoate + glutathione disulfide + H2O. The enzyme catalyses (15S)-hydroperoxy-(11Z,13E)-eicosadienoate + 2 glutathione = (15S)-hydroxy-(11Z,13E)-eicosadienoate + glutathione disulfide + H2O. The catalysed reaction is (17S)-hydroperoxy-(4Z,7Z,10Z,13Z,15E,19Z)-docosahexaenoate + 2 glutathione = (17S)-hydroxy-(4Z,7Z,10Z,13Z,15E,19Z)-docosahexaenoate + glutathione disulfide + H2O. It carries out the reaction a hydroperoxy-1,2-diacyl-glycero-3-phosphocholine + 2 glutathione = a hydroxy-1,2-diacyl-glycero-3-phosphocholine + glutathione disulfide + H2O. In terms of biological role, essential antioxidant peroxidase that directly reduces phospholipid hydroperoxide even if they are incorporated in membranes and lipoproteins. Can also reduce fatty acid hydroperoxide, cholesterol hydroperoxide and thymine hydroperoxide. Plays a key role in protecting cells from oxidative damage by preventing membrane lipid peroxidation. Required to prevent cells from ferroptosis, a non-apoptotic cell death resulting from an iron-dependent accumulation of lipid reactive oxygen species. The presence of selenocysteine (Sec) versus Cys at the active site is essential for life: it provides resistance to overoxidation and prevents cells against ferroptosis. The presence of Sec at the active site is also essential for the survival of a specific type of parvalbumin-positive interneurons, thereby preventing against fatal epileptic seizures. May be required to protect cells from the toxicity of ingested lipid hydroperoxides. Required for normal sperm development and male fertility. Essential for maturation and survival of photoreceptor cells. Plays a role in a primary T-cell response to viral and parasitic infection by protecting T-cells from ferroptosis and by supporting T-cell expansion. Plays a role of glutathione peroxidase in platelets in the arachidonic acid metabolism. Reduces hydroperoxy ester lipids formed by a 15-lipoxygenase that may play a role as down-regulator of the cellular 15-lipoxygenase pathway. Can also reduce small soluble hydroperoxides such as H2O2, cumene hydroperoxide and tert-butyl hydroperoxide. Its function is as follows. Specifically able to suppress the production of leukotriene and prostaglandin in response to several stimuli by reducing fatty acid hydroperoxide. Functionally, specifically required to prevent mitochondrial cell death by mediating reduction of cardiolipin hydroperoxide. Also required for normal sperm development and male fertility. Required for male fertility by stabilizing the condensed chromatin in sperm nuclei. The chain is Phospholipid hydroperoxide glutathione peroxidase from Rattus norvegicus (Rat).